The chain runs to 274 residues: Halorhodopsin (274 aa).

A propeptide spanning residues Met-1–Ala-21 is cleaved from the precursor. Residues Ala-22–Glu-25 lie on the Extracellular side of the membrane. A helical transmembrane segment spans residues Asn-26 to Gly-51. At Arg-52–Gly-57 the chain is on the cytoplasmic side. A helical transmembrane segment spans residues Arg-58–Leu-81. Residues Ser-82–Gln-105 are Extracellular-facing. Gln-105, Thr-111, and Ser-115 together coordinate chloride. Residues Trp-106–Ala-127 form a helical membrane-spanning segment. The Cytoplasmic segment spans residues Asp-128–Asp-130. The chain crosses the membrane as a helical span at residues Leu-131–Thr-154. The Extracellular segment spans residues Thr-155–Ala-157. The helical transmembrane segment at Leu-158–Val-180 threads the bilayer. Residues Thr-181–Thr-192 are Cytoplasmic-facing. A helical transmembrane segment spans residues Ala-193–Val-216. Residues Gly-217 to Ser-226 are Extracellular-facing. The helical transmembrane segment at Val-227–Asn-255 threads the bilayer. N6-(retinylidene)lysine is present on Lys-242. Over Asn-256–Asp-274 the chain is Cytoplasmic.

It belongs to the archaeal/bacterial/fungal opsin family. As to quaternary structure, homotrimer.

It is found in the cell membrane. Light-driven chloride pump. This chain is Halorhodopsin (hop), found in Halobacterium salinarum (strain ATCC 29341 / DSM 671 / R1).